Reading from the N-terminus, the 1497-residue chain is Polyunsaturated fatty acid synthase subunit C (1497 aa).

Dehydratase (DH) domain stretches follow at residues 271–422 (YKLC…DYGK) and 797–937 (QGQY…RVRI). A compositionally biased stretch (low complexity) spans 944–958 (ASSSASSVGSSASAE). The interval 944–977 (ASSSASSVGSSASAEVAERTRSKAAPQPVASGPA) is disordered. Positions 1026–1470 (LGDLGDRSFM…ILRGACYLRR (445 aa)) are enoylreductase (ER) domain.

This sequence belongs to the thioester dehydratase family. FabA subfamily. In terms of assembly, component of the polyunsaturated fatty acid synthase complex composed of at least ORF-A, ORF-B and ORF-C.

It functions in the pathway lipid metabolism; fatty acid biosynthesis. Polyketide synthase-like protein; part of the polyunsaturated fatty acid synthase composed of the 3 PKS-like subunits A, B and C. While the saturated fatty acids (SFAs) in Thraustochytrium are produced by the conventional fatty acid synthase (FAS) pathway, polyunsaturated fatty acids (PUFAs) including docosahexeanoic acid (DHA) and docosapentaenoic acid (DPA) are synthesized via an anaerobical PKS pathway. PUFA synthase assimilates fatty acyl-CoA, the product of FAS, as the starter unit to synthesize DPA, and this starter unit may be butyryl-CoA, hexanoyl-CoA, or octanoyl-CoA. DPA and DHA biosynthesis seem to differ by the reduction at the N-3 position by PUFA synthase, not the extension of carbon chain. In DHA biosynthesis, PUFA synthase extends the fatty acyl chain from the methyl toward the carboxyl end, and the double bond is formed when the carbon chain is growing, instead of afterward. Therefore, PUFA synthase is unable to transform DPA to DHA, suggesting that DPA is not the precursor of DHA. Moreover, DPA molecule is partly extended by FAS KS domain, so DPA biosynthesis is less dependent on PUFA synthase KS domain than DHA. This Thraustochytrium sp. (strain ATCC 26185 / S-3) protein is Polyunsaturated fatty acid synthase subunit C.